The primary structure comprises 152 residues: Ribosome maturation factor RimP (152 aa).

It belongs to the RimP family.

The protein resides in the cytoplasm. Required for maturation of 30S ribosomal subunits. This chain is Ribosome maturation factor RimP, found in Desulfatibacillum aliphaticivorans.